The following is a 110-amino-acid chain: MLSLAKIAALFVLTAVAEIVGCYLPWLVLKAGKPAWLLAPAALSLALFAWLLTLHPAAAARTYAAYGGVYIAVALAWLRIVDGVPLSRWDVAGAALALAGMSVIALQPRG.

Helical transmembrane passes span 9–29, 34–54, 64–84, and 86–106; these read ALFV…WLVL, PAWL…LLTL, AAYG…VDGV, and LSRW…VIAL.

The protein belongs to the UPF0060 family.

The protein localises to the cell inner membrane. This is UPF0060 membrane protein BPSL1340 from Burkholderia pseudomallei (strain K96243).